We begin with the raw amino-acid sequence, 337 residues long: Fructose-1,6-bisphosphatase class 1 (337 aa).

Mg(2+) contacts are provided by glutamate 94, aspartate 116, leucine 118, and aspartate 119. Residues 119–122 (DGSS), asparagine 210, and lysine 276 each bind substrate. Glutamate 282 serves as a coordination point for Mg(2+).

It belongs to the FBPase class 1 family. Homotetramer. Mg(2+) is required as a cofactor.

Its subcellular location is the cytoplasm. It catalyses the reaction beta-D-fructose 1,6-bisphosphate + H2O = beta-D-fructose 6-phosphate + phosphate. Its pathway is carbohydrate biosynthesis; gluconeogenesis. This is Fructose-1,6-bisphosphatase class 1 from Burkholderia cenocepacia (strain HI2424).